The sequence spans 507 residues: MEELQRYLKMDRSRERDFLYPLLFQEYIYALAHDFGLTKSIPYESMQILSYDNKYSSLIVKRLIIRMYQQKHLIILDNDSKNKNFLGHNKNLYSQMISEGFAVIVEIPFALRLVSSYQGKEIEKSINLGSIHSTFPFLEDKFVHLNHVLNILIPYPIHFELIVQNLRCWIQDASFLHLLRFFLYEYHNWNSFTTQKMKQNSLFLKENRRFFLFLYNFHVYESESIFLFLRKKSYHLRSTSSIAFLDRTHFFGKIEHLKVVFRNDFHTMLWLFKDPFMHYFRYQGKSIMSSKGTPLLMKKWKYYLVNLWECHFYFWSQPNRIHINQLSNIFLNFLGYLSSVRPNPSVVRNQMLENAFIIDISINKLNTLVPIIPLIGSLAKAKFCNLSGQPISKPAWTDSLDSDIIDRFGRICRNVSHYYSGSSKKKTLYRIKYILRLSCARTLARKHKSSVRSFLKRLGSEFLEEFLIEEEQVLSFILPKISSSSQRLSKERIWYFDIIRINDLMDL.

Belongs to the intron maturase 2 family. MatK subfamily.

The protein resides in the plastid. Its subcellular location is the chloroplast. Usually encoded in the trnK tRNA gene intron. Probably assists in splicing its own and other chloroplast group II introns. This chain is Maturase K, found in Ranunculus repens (Creeping buttercup).